A 1306-amino-acid chain; its full sequence is Angiotensin-converting enzyme (1306 aa).

Positions 1-29 (MGAASGRRGPGLLLPLPLLLLLPPQPALA) are cleaved as a signal peptide. At 30–1256 (LDPGLQPGNF…GLDLDAQQAR (1227 aa)) the chain is on the extracellular side. N-linked (GlcNAc...) asparagine glycosylation is found at N38, N54, N74, E103, N111, I121, Y140, N146, and N160. Peptidase M2 domains follow at residues 40 to 624 (SADE…LGWP) and 643 to 1222 (VTDE…LGWP). C157 and C165 are disulfide-bonded. Y231 contributes to the chloride binding site. 2 N-linked (GlcNAc...) asparagine glycosylation sites follow: N318 and N368. Cysteines 359 and 377 form a disulfide. Position 390 (H390) interacts with Zn(2+). The active-site Proton acceptor 1 is the E391. Residues H394, P414, E418, and R442 each contribute to the Zn(2+) site. 2 N-linked (GlcNAc...) asparagine glycosylation sites follow: N445 and N509. H520 acts as the Proton donor 1 in catalysis. R529 is a chloride binding site. C545 and C557 form a disulfide bridge. N-linked (GlcNAc...) asparagine glycosylation is found at N617 and N677. N-linked (GlcNAc...) (complex) asparagine glycosylation is found at N695 and N714. A disulfide bridge connects residues C757 and C763. A glycan (N-linked (GlcNAc...) asparagine; partial) is linked at N760. The chloride site is built by R791 and Y829. N942 is a glycosylation site (N-linked (GlcNAc...) asparagine; partial). Cysteines 957 and 975 form a disulfide. H988 contacts Zn(2+). E989 serves as the catalytic Proton acceptor 2. Zn(2+) contacts are provided by H992 and E1016. Chloride is bound by residues W1090 and R1094. H1118 functions as the Proton donor 2 in the catalytic mechanism. R1127 lines the chloride pocket. C1143 and C1155 form a disulfide bridge. The N-linked (GlcNAc...) asparagine; partial glycan is linked to N1191. The tract at residues 1215–1256 (HGEKLGWPQYNWTPNSARSEGPLPDSGRVSFLGLDLDAQQAR) is juxtamembrane stalk. A helical transmembrane segment spans residues 1257-1277 (VGQWLLLFLGIALLVATLGLS). Residues 1278-1306 (QRLFSIRHRSLHRHSHGPQFGSEVELRHS) are Cytoplasmic-facing. Phosphoserine is present on S1299.

It belongs to the peptidase M2 family. In terms of assembly, monomer and homodimer; homodimerizes following binding to an inhibitor. Interacts with calmodulin (CALM1, CALM2 or CALM3); interaction takes place in the cytoplasmic region and regulates phosphorylation and proteolytic cleavage. The cofactor is Zn(2+). It depends on chloride as a cofactor. Post-translationally, produced following proteolytic cleavage by secretase enzymes that cleave the transmembrane form in the juxtamembrane stalk region upstream of the transmembrane region. Cleavage can take place at different sites of the juxtamembrane stalk region. In terms of processing, phosphorylated by CK2 on Ser-1299; which allows membrane retention. Phosphorylated on tyrosine residues on its extracellular part, promoting cleavage by secretase enzymes and formation of the soluble form (Angiotensin-converting enzyme, soluble form). As to expression, ubiquitously expressed, with highest levels in lung, kidney, heart, gastrointestinal system and prostate. Specifically expressed in spermatocytes and adult testis.

Its subcellular location is the cell membrane. The protein localises to the cytoplasm. It is found in the secreted. The enzyme catalyses Release of a C-terminal dipeptide, oligopeptide-|-Xaa-Yaa, when Xaa is not Pro, and Yaa is neither Asp nor Glu. Thus, conversion of angiotensin I to angiotensin II, with increase in vasoconstrictor activity, but no action on angiotensin II.. It carries out the reaction angiotensin I + H2O = L-histidyl-L-leucine + angiotensin II. The catalysed reaction is bradykinin + H2O = L-Phe-L-Arg + bradykinin(1-7). It catalyses the reaction substance P + H2O = substance P(1-9) + L-Leu-L-Met-NH2. The enzyme catalyses substance P + H2O = substance P(1-8) + Gly-L-Leu-L-Met-NH2. It carries out the reaction substance P + H2O = L-Phe-L-Phe-Gly-L-Leu-L-Met-NH2 + substance P(1-6). The catalysed reaction is neurotensin + H2O = neurotensin(1-11) + L-isoleucyl-L-leucine. It catalyses the reaction goralatide + H2O = N-acetyl-L-seryl-L-aspartate + L-lysyl-L-proline. The enzyme catalyses Met-enkephalin + H2O = L-phenylalanyl-L-methionine + L-tyrosylglycylglycine. It carries out the reaction Leu-enkephalin + H2O = L-tyrosylglycylglycine + L-phenylalanyl-L-leucine. The catalysed reaction is Met-enkephalin-Arg-Phe + H2O = L-arginyl-L-phenylalanine + Met-enkephalin. Its activity is regulated as follows. The dipeptidyl carboxypeptidase activity is strongly activated by chloride. The dipeptidyl carboxypeptidase activity is specifically inhibited by lisinopril, captopril and enalaprilat. Strongly inhibited by lisinopril and captopril. Its function is as follows. Dipeptidyl carboxypeptidase that removes dipeptides from the C-terminus of a variety of circulating hormones, such as angiotensin I, bradykinin or enkephalins, thereby playing a key role in the regulation of blood pressure, electrolyte homeostasis or synaptic plasticity. Composed of two similar catalytic domains, each possessing a functional active site, with different selectivity for substrates. Plays a major role in the angiotensin-renin system that regulates blood pressure and sodium retention by the kidney by converting angiotensin I to angiotensin II, resulting in an increase of the vasoconstrictor activity of angiotensin. Also able to inactivate bradykinin, a potent vasodilator, and therefore enhance the blood pressure response. Acts as a regulator of synaptic transmission by mediating cleavage of neuropeptide hormones, such as substance P, neurotensin or enkephalins. Catalyzes degradation of different enkephalin neuropeptides (Met-enkephalin, Leu-enkephalin, Met-enkephalin-Arg-Phe and possibly Met-enkephalin-Arg-Gly-Leu). Acts as a regulator of synaptic plasticity in the nucleus accumbens of the brain by mediating cleavage of Met-enkephalin-Arg-Phe, a strong ligand of Mu-type opioid receptor OPRM1, into Met-enkephalin. Met-enkephalin-Arg-Phe cleavage by ACE decreases activation of OPRM1, leading to long-term synaptic potentiation of glutamate release. Also acts as a regulator of hematopoietic stem cell differentiation by mediating degradation of hemoregulatory peptide N-acetyl-SDKP (AcSDKP). Acts as a regulator of cannabinoid signaling pathway by mediating degradation of hemopressin, an antagonist peptide of the cannabinoid receptor CNR1. Involved in amyloid-beta metabolism by catalyzing degradation of Amyloid-beta protein 40 and Amyloid-beta protein 42 peptides, thereby preventing plaque formation. Catalyzes cleavage of cholecystokinin (maturation of Cholecystokinin-8 and Cholecystokinin-5) and Gonadoliberin-1 (both maturation and degradation) hormones. Degradation of hemoregulatory peptide N-acetyl-SDKP (AcSDKP) and amyloid-beta proteins is mediated by the N-terminal catalytic domain, while angiotensin I and cholecystokinin cleavage is mediated by the C-terminal catalytic region. Functionally, soluble form that is released in blood plasma and other body fluids following proteolytic cleavage in the juxtamembrane stalk region. In terms of biological role, isoform produced by alternative promoter usage that is specifically expressed in spermatocytes and adult testis, and which is required for male fertility. In contrast to somatic isoforms, only contains one catalytic domain. Acts as a dipeptidyl carboxypeptidase that removes dipeptides from the C-terminus of substrates. The identity of substrates that are needed for male fertility is unknown. May also have a glycosidase activity which releases GPI-anchored proteins from the membrane by cleaving the mannose linkage in the GPI moiety. The GPIase activity was reported to be essential for the egg-binding ability of the sperm. This activity is however unclear and has been challenged by other groups, suggesting that it may be indirect. In Homo sapiens (Human), this protein is Angiotensin-converting enzyme.